We begin with the raw amino-acid sequence, 68 residues long: Adipokinetic prohormone type 1 (68 aa).

An N-terminal signal peptide occupies residues 1-20 (MNYVSIFVLIVACLCVLADA). Pyrrolidone carboxylic acid is present on glutamine 21. Glycine 30 is modified (glycine amide). A propeptide spanning residues 34–68 (GAVAATMSCRSEETIAAIYKLIQNEAERLLLCQKP) is cleaved from the precursor.

As to expression, expressed in antennal lobe (AL), corpora cardiaca (CC), corpora allata (CA) and gnathal ganglion (GNG) (at protein level). Expression in CC and CA detected in all animals, expression in GNG in some animals and in AL in few animals (at protein level).

The protein resides in the secreted. Its function is as follows. This hormone, released from cells in the corpora cardiaca, causes release of diglycerides from the fat body and stimulation of muscles to use these diglycerides as an energy source during energy-demanding processes. In Agrotis ipsilon (Black cutworm moth), this protein is Adipokinetic prohormone type 1.